A 214-amino-acid polypeptide reads, in one-letter code: Small ribosomal subunit protein uS5 (214 aa).

Residues 54–117 form the S5 DRBM domain; sequence LKYEVVDIKV…RDAKMNIIPV (64 aa).

It belongs to the universal ribosomal protein uS5 family. As to quaternary structure, part of the 30S ribosomal subunit. Contacts protein S4.

Functionally, with S4 and S12 plays an important role in translational accuracy. In Saccharolobus solfataricus (strain ATCC 35092 / DSM 1617 / JCM 11322 / P2) (Sulfolobus solfataricus), this protein is Small ribosomal subunit protein uS5.